Here is a 747-residue protein sequence, read N- to C-terminus: Probable cyclic nucleotide-gated ion channel 6 (747 aa).

The Cytoplasmic segment spans residues 1–117; the sequence is MFDTCGPKGV…DKFLLLCNKL (117 aa). A helical membrane pass occupies residues 118-138; it reads FVASCILAVSVDPLFLYLPFI. Over 139-150 the chain is Extracellular; it reads NDKAKCVGIDRK. Residues 151–171 traverse the membrane as a helical segment; the sequence is LAIIVTTIRTVIDSFYLFHMA. Topologically, residues 172-205 are cytoplasmic; the sequence is LRFRTAYVAPSSRVFGRGELVIDPAQIAKRYLQQ. Residues 206-226 traverse the membrane as a helical segment; it reads YFIIDLLSVLPVPQIIVWRFL. The Extracellular portion of the chain corresponds to 227 to 239; that stretch reads YTSRGANVLATKQ. A helical transmembrane segment spans residues 240-260; it reads ALRYIVLVQYIPRFLRMYPLS. Residues 261-280 are Cytoplasmic-facing; that stretch reads SELKRTAGVFAETAWAGAAY. Residues 281–301 traverse the membrane as a helical segment; that stretch reads YLLLYMLASHIVGALWYLLAL. Over 302–407 the chain is Extracellular; that stretch reads ERNNDCWSKA…GQGLETSTYP (106 aa). Residues 408–428 traverse the membrane as a helical segment; the sequence is GEVIFSITLAIAGLLLFALLI. At 429-747 the chain is on the cytoplasmic side; it reads GNMQTYLQSL…PEPDFSAEDH (319 aa). A nucleoside 3',5'-cyclic phosphate-binding positions include 514-638 and Asp585; that span reads LFEN…SRQV. The tract at residues 630–645 is calmodulin-binding; the sequence is FRRLHSRQVQHTFRFY. The 30-residue stretch at 650–679 folds into the IQ domain; it reads RTWAACFMQAAWRRYIKRKKLEQLRKEEEE.

The protein belongs to the cyclic nucleotide-gated cation channel (TC 1.A.1.5) family. As to quaternary structure, homotetramer or heterotetramer.

The protein localises to the cell membrane. In terms of biological role, probable cyclic nucleotide-gated ion channel. This Arabidopsis thaliana (Mouse-ear cress) protein is Probable cyclic nucleotide-gated ion channel 6 (CNGC6).